The following is a 69-amino-acid chain: Sec-independent protein translocase protein TatA (69 aa).

Residues 1–21 traverse the membrane as a helical segment; the sequence is MFGLGGQELILILMIILLLFG. The disordered stretch occupies residues 49 to 69; sequence EFNKAMDDETPKKKDFGPDRE.

This sequence belongs to the TatA/E family. Forms a complex with TatC.

Its subcellular location is the cell inner membrane. Part of the twin-arginine translocation (Tat) system that transports large folded proteins containing a characteristic twin-arginine motif in their signal peptide across membranes. TatA could form the protein-conducting channel of the Tat system. In Chlorobium luteolum (strain DSM 273 / BCRC 81028 / 2530) (Pelodictyon luteolum), this protein is Sec-independent protein translocase protein TatA.